The sequence spans 428 residues: Glutamine synthetase, chloroplastic (428 aa).

The transit peptide at 1-48 directs the protein to the chloroplast; it reads MAQAVVPAMQCQVGAVRARPAAAAAAAGGRVWGVRRTGRGTSGFRVMA. Residues 75-155 enclose the GS beta-grasp domain; it reads IIAEYIWVGG…VMCDTYTPAG (81 aa). A disordered region spans residues 95-120; it reads TISKPVEDPSELPKWNYDGSSTGQAP. A GS catalytic domain is found at 159–428; sequence PTNKRNRAAQ…LAAKKLALKV (270 aa).

The protein belongs to the glutamine synthetase family. In terms of assembly, homooctamer.

It localises to the plastid. The protein localises to the chloroplast. It catalyses the reaction L-glutamate + NH4(+) + ATP = L-glutamine + ADP + phosphate + H(+). Its function is as follows. Light-modulated chloroplastic glutamine synthetase, encoded by a nuclear gene and expressed primarily in leaves, and which is responsible for the reassimilation of the ammonia generated by photorespiration. In Oryza sativa subsp. japonica (Rice), this protein is Glutamine synthetase, chloroplastic.